Here is a 336-residue protein sequence, read N- to C-terminus: 3-isopropylmalate dehydrogenase (336 aa).

Residues R87, R97, R121, and D211 each contribute to the substrate site. Mg(2+)-binding residues include D211, D235, and D239. Residue 271–283 (GSAPDIAGQGIAD) coordinates NAD(+).

This sequence belongs to the isocitrate and isopropylmalate dehydrogenases family. LeuB type 2 subfamily. As to quaternary structure, homodimer. Mg(2+) serves as cofactor. Requires Mn(2+) as cofactor.

Its subcellular location is the cytoplasm. It catalyses the reaction (2R,3S)-3-isopropylmalate + NAD(+) = 4-methyl-2-oxopentanoate + CO2 + NADH. It participates in amino-acid biosynthesis; L-leucine biosynthesis; L-leucine from 3-methyl-2-oxobutanoate: step 3/4. Its function is as follows. Catalyzes the oxidation of 3-carboxy-2-hydroxy-4-methylpentanoate (3-isopropylmalate) to 3-carboxy-4-methyl-2-oxopentanoate. The product decarboxylates to 4-methyl-2 oxopentanoate. This chain is 3-isopropylmalate dehydrogenase, found in Mycolicibacterium paratuberculosis (strain ATCC BAA-968 / K-10) (Mycobacterium paratuberculosis).